Here is a 130-residue protein sequence, read N- to C-terminus: Cuticle protein 14 isoform b (130 aa).

The region spanning 24–90 (IGNYNFGYNE…NVHTNEPGTD (67 aa)) is the Chitin-binding type R&amp;R domain.

This Limulus polyphemus (Atlantic horseshoe crab) protein is Cuticle protein 14 isoform b.